The chain runs to 364 residues: Phenylalanine dehydrogenase (364 aa).

Arg-62 contacts NAD(+). Residue Lys-86 coordinates L-phenylalanine. Residue Lys-98 is the Proton donor/acceptor of the active site. NAD(+)-binding positions include Asp-133, Ser-164, Thr-168, 255–256, and 276–278; these read AM and AAN. Residue Asn-278 participates in L-phenylalanine binding.

This sequence belongs to the Glu/Leu/Phe/Val dehydrogenases family.

The catalysed reaction is L-phenylalanine + NAD(+) + H2O = 3-phenylpyruvate + NH4(+) + NADH + H(+). Its pathway is amino-acid biosynthesis; L-phenylalanine biosynthesis; L-phenylalanine from phenylpyruvate (PDH route): step 1/1. In terms of biological role, catalyzes the reversible NAD(+)-dependent oxidative deamination of L-phenylalanine to phenylpyruvate. The chain is Phenylalanine dehydrogenase from Rhodococcus jostii (strain RHA1).